Here is a 165-residue protein sequence, read N- to C-terminus: Glucosamine 6-phosphate N-acetyltransferase 1 (165 aa).

Residues Tyr-22–Phe-165 enclose the N-acetyltransferase domain. Residues Ser-44, Lys-92–Arg-95, and Glu-104–Val-106 each bind substrate. Gly-114–Glu-119 provides a ligand contact to acetyl-CoA. Tyr-135 to Lys-136 is a substrate binding site. Acetyl-CoA is bound at residue Tyr-149 to Lys-151.

Belongs to the acetyltransferase family. GNA1 subfamily. As to quaternary structure, homodimer. In terms of tissue distribution, highly expressed in the root elongation zone and at lower levels in leaves and grains.

The protein localises to the endoplasmic reticulum membrane. It catalyses the reaction D-glucosamine 6-phosphate + acetyl-CoA = N-acetyl-D-glucosamine 6-phosphate + CoA + H(+). It functions in the pathway nucleotide-sugar biosynthesis; UDP-N-acetyl-alpha-D-glucosamine biosynthesis; N-acetyl-alpha-D-glucosamine 1-phosphate from alpha-D-glucosamine 6-phosphate (route I): step 1/2. Its function is as follows. Acetyltransferase involved in de novo biosynthesis of UDP-N-acetylglucosamine (UDP-GlcNAc) in roots and is required for maintaining normal root cell shape. UDP-GlcNAc is an essential metabolite that serves as an initial sugar donor for N-glycan synthesis and thus plays an important role in protein and lipid glycosylation. This Oryza sativa subsp. japonica (Rice) protein is Glucosamine 6-phosphate N-acetyltransferase 1 (GNA1).